The primary structure comprises 495 residues: RuBisCO large subunit-binding protein subunit alpha (495 aa).

The protein belongs to the chaperonin (HSP60) family. Oligomer of probably six alpha and six beta subunits.

The protein localises to the plastid. It localises to the chloroplast. In terms of biological role, this protein binds RuBisCO small and large subunits and is implicated in the assembly of the enzyme oligomer. The protein is RuBisCO large subunit-binding protein subunit alpha of Ricinus communis (Castor bean).